A 455-amino-acid chain; its full sequence is Phosphoglucosamine/phosphogalactosamine mutase (455 aa).

Ser97 (phosphoserine intermediate) is an active-site residue. Ser97, Asp241, Asp243, and Asp245 together coordinate Mg(2+). Ser97 carries the post-translational modification Phosphoserine.

This sequence belongs to the phosphohexose mutase family. It depends on Mg(2+) as a cofactor. Activated by phosphorylation.

It catalyses the reaction alpha-D-glucosamine 1-phosphate = D-glucosamine 6-phosphate. The enzyme catalyses D-galactosamine 6-phosphate = alpha-D-galactosamine 1-phosphate. Functionally, involved in the synthesis of UDP-N-acetylglucosamine (UDP-GlcNAc) and UDP-N-acetylgalactosamine (UDP-GalNAc). Catalyzes the conversion of glucosamine-6-phosphate to glucosamine-1-phosphate and of galactosamine-6-phosphate to galactosamine-1-phosphate. The chain is Phosphoglucosamine/phosphogalactosamine mutase from Sulfurisphaera tokodaii (strain DSM 16993 / JCM 10545 / NBRC 100140 / 7) (Sulfolobus tokodaii).